The following is a 125-amino-acid chain: Fluoride-specific ion channel FluC (125 aa).

4 consecutive transmembrane segments (helical) span residues 9 to 29 (LFCA…YGLL), 32 to 52 (AFPY…GLIM), 67 to 87 (IGLT…SYET), and 99 to 119 (AFTN…LGII). Na(+) is bound by residues Gly75 and Thr78.

It belongs to the fluoride channel Fluc/FEX (TC 1.A.43) family.

It is found in the cell inner membrane. The enzyme catalyses fluoride(in) = fluoride(out). With respect to regulation, na(+) is not transported, but it plays an essential structural role and its presence is essential for fluoride channel function. Fluoride-specific ion channel. Important for reducing fluoride concentration in the cell, thus reducing its toxicity. The polypeptide is Fluoride-specific ion channel FluC (Trichlorobacter lovleyi (strain ATCC BAA-1151 / DSM 17278 / SZ) (Geobacter lovleyi)).